A 93-amino-acid polypeptide reads, in one-letter code: Cell division protein CrgA (93 aa).

2 consecutive transmembrane segments (helical) span residues 31 to 51 (VWFV…LMVF) and 70 to 90 (LGPW…LLTM).

It belongs to the CrgA family.

The protein localises to the cell membrane. In terms of biological role, involved in cell division. This chain is Cell division protein CrgA, found in Mycobacterium bovis (strain ATCC BAA-935 / AF2122/97).